A 438-amino-acid chain; its full sequence is Na(+)/H(+) antiporter NhaA (438 aa).

11 helical membrane-spanning segments follow: residues 23 to 43, 62 to 82, 104 to 124, 133 to 153, 162 to 182, 185 to 205, 212 to 232, 302 to 322, 337 to 357, 372 to 392, and 410 to 430; these read FGGI…NSFL, FFIG…LFFL, SFPV…YFFL, GFGI…MLLG, VFLI…IALF, TNLK…LAVL, SLIP…QSGI, FLAP…NAGV, LGVI…ITFI, WWHI…SMFI, and IAIL…LFVL.

Belongs to the NhaA Na(+)/H(+) (TC 2.A.33) antiporter family.

The protein localises to the cell inner membrane. The catalysed reaction is Na(+)(in) + 2 H(+)(out) = Na(+)(out) + 2 H(+)(in). Functionally, na(+)/H(+) antiporter that extrudes sodium in exchange for external protons. In Helicobacter pylori (strain G27), this protein is Na(+)/H(+) antiporter NhaA.